Reading from the N-terminus, the 240-residue chain is MKPAYFISDLHLSEKHPELTALLLRFLRSSAAGQARAVYILGDLFDFWVGDDEVSELNTSVAREIRKLSDKGVAVFFVRGNRDFLIGQDFCRQAGMTLLPDYSVLDLFGCKTLICHGDTLCTDDRAYQRFRKIVHRKRLQKLFLMLPLKWRTRLATKIRRVSKMEKQVKPADIMDVNAAFTARQVRAFGAERLIHGHTHREHIHHENGFTRIVLGDWHNDYASILRVDGDGAVFVPLEKY.

5 residues coordinate Mn(2+): aspartate 9, histidine 11, aspartate 43, asparagine 81, and histidine 116. A substrate-binding site is contributed by 81-82; sequence NR. Positions 124, 162, 166, 169, and 197 each coordinate substrate. Residues histidine 197 and histidine 199 each coordinate Mn(2+).

Belongs to the LpxH family. Mn(2+) is required as a cofactor.

The protein localises to the cell inner membrane. It carries out the reaction UDP-2-N,3-O-bis[(3R)-3-hydroxytetradecanoyl]-alpha-D-glucosamine + H2O = 2-N,3-O-bis[(3R)-3-hydroxytetradecanoyl]-alpha-D-glucosaminyl 1-phosphate + UMP + 2 H(+). The protein operates within glycolipid biosynthesis; lipid IV(A) biosynthesis; lipid IV(A) from (3R)-3-hydroxytetradecanoyl-[acyl-carrier-protein] and UDP-N-acetyl-alpha-D-glucosamine: step 4/6. In terms of biological role, hydrolyzes the pyrophosphate bond of UDP-2,3-diacylglucosamine to yield 2,3-diacylglucosamine 1-phosphate (lipid X) and UMP by catalyzing the attack of water at the alpha-P atom. Involved in the biosynthesis of lipid A, a phosphorylated glycolipid that anchors the lipopolysaccharide to the outer membrane of the cell. The protein is UDP-2,3-diacylglucosamine hydrolase of Neisseria meningitidis serogroup C / serotype 2a (strain ATCC 700532 / DSM 15464 / FAM18).